The following is a 150-amino-acid chain: L-alanine exporter AlaE (150 aa).

A run of 4 helical transmembrane segments spans residues 17–37 (FAMV…VSGM), 48–68 (LSIP…DYVL), 86–106 (LVAY…TVGA), and 111–131 (IITA…LYGY).

This sequence belongs to the AlaE exporter family.

It localises to the cell inner membrane. Its function is as follows. Exports L-alanine. The sequence is that of L-alanine exporter AlaE from Vibrio cholerae serotype O1 (strain ATCC 39315 / El Tor Inaba N16961).